The chain runs to 442 residues: GPI mannosyltransferase 1 (442 aa).

8 consecutive transmembrane segments (helical) span residues 22 to 42 (INLT…LIVF), 95 to 115 (ILIH…IIAY), 177 to 197 (LASI…IYSI), 242 to 262 (AFTF…IFLF), 307 to 327 (MIVA…ITLV), 336 to 356 (LLLE…QYFI), 361 to 381 (ILPL…ILFA), and 408 to 428 (IWVA…KLIL).

The protein belongs to the PIGM family.

It localises to the endoplasmic reticulum membrane. It participates in glycolipid biosynthesis; glycosylphosphatidylinositol-anchor biosynthesis. Its function is as follows. Mannosyltransferase involved in glycosylphosphatidylinositol-anchor biosynthesis. Transfers the first alpha-1,4-mannose to GlcN-acyl-PI during GPI precursor assembly. The protein is GPI mannosyltransferase 1 (pigm) of Dictyostelium discoideum (Social amoeba).